A 239-amino-acid chain; its full sequence is ATP-dependent dethiobiotin synthetase BioD (239 aa).

E15–F20 serves as a coordination point for ATP. Mg(2+) is bound at residue T19. K40 is a catalytic residue. ATP-binding positions include D57, E118–G121, N178–H179, and A211–L213. Mg(2+) is bound by residues D57 and E118.

It belongs to the dethiobiotin synthetase family. In terms of assembly, homodimer. It depends on Mg(2+) as a cofactor.

The protein resides in the cytoplasm. The enzyme catalyses (7R,8S)-7,8-diammoniononanoate + CO2 + ATP = (4R,5S)-dethiobiotin + ADP + phosphate + 3 H(+). It functions in the pathway cofactor biosynthesis; biotin biosynthesis; biotin from 7,8-diaminononanoate: step 1/2. Functionally, catalyzes a mechanistically unusual reaction, the ATP-dependent insertion of CO2 between the N7 and N8 nitrogen atoms of 7,8-diaminopelargonic acid (DAPA, also called 7,8-diammoniononanoate) to form a ureido ring. In Burkholderia vietnamiensis (strain G4 / LMG 22486) (Burkholderia cepacia (strain R1808)), this protein is ATP-dependent dethiobiotin synthetase BioD.